Reading from the N-terminus, the 484-residue chain is Regulator of G-protein signaling 9 (484 aa).

A DEP domain is found at Pro-30–Thr-105. The G protein gamma domain occupies Ile-219–Leu-280. One can recognise an RGS domain in the interval Asn-299 to Leu-414.

As to quaternary structure, heterodimer with Gbeta5. Interacts with RGS7BP, leading to regulate the subcellular location of the heterodimer formed with Gbeta5. Component of the RGS9-1-Gbeta5 complex composed of RGS9 (RGS9-1), Gbeta5 (GNB5) and RGS9BP. In terms of processing, phosphorylation is decreased by light exposition.

It is found in the membrane. Functionally, inhibits signal transduction by increasing the GTPase activity of G protein alpha subunits thereby driving them into their inactive GDP-bound form. Binds to G(t)-alpha. Involved in phototransduction; key element in the recovery phase of visual transduction. This is Regulator of G-protein signaling 9 from Tamias striatus (Eastern chipmunk).